The primary structure comprises 382 residues: UDP-4-amino-4-deoxy-L-arabinose--oxoglutarate aminotransferase (382 aa).

The residue at position 182 (Lys-182) is an N6-(pyridoxal phosphate)lysine.

The protein belongs to the DegT/DnrJ/EryC1 family. ArnB subfamily. Homodimer. Pyridoxal 5'-phosphate serves as cofactor.

The catalysed reaction is UDP-4-amino-4-deoxy-beta-L-arabinose + 2-oxoglutarate = UDP-beta-L-threo-pentopyranos-4-ulose + L-glutamate. Its pathway is nucleotide-sugar biosynthesis; UDP-4-deoxy-4-formamido-beta-L-arabinose biosynthesis; UDP-4-deoxy-4-formamido-beta-L-arabinose from UDP-alpha-D-glucuronate: step 2/3. The protein operates within bacterial outer membrane biogenesis; lipopolysaccharide biosynthesis. Its function is as follows. Catalyzes the conversion of UDP-4-keto-arabinose (UDP-Ara4O) to UDP-4-amino-4-deoxy-L-arabinose (UDP-L-Ara4N). The modified arabinose is attached to lipid A and is required for resistance to polymyxin and cationic antimicrobial peptides. The polypeptide is UDP-4-amino-4-deoxy-L-arabinose--oxoglutarate aminotransferase (Yersinia enterocolitica serotype O:8 / biotype 1B (strain NCTC 13174 / 8081)).